We begin with the raw amino-acid sequence, 318 residues long: Leucine-rich repeat domain-containing protein YddK (318 aa).

LRR repeat units lie at residues 109–129, 130–151, 153–173, 174–194, 195–216, 217–237, 238–258, 260–280, and 284–305; these read NFTS…TNYD, RLVK…QGRN, SITH…DRLS, SVTY…ESCE, WLQY…NKNE, LLLL…LFPN, LNTL…YSNF, NVQT…DFLT, and SIKS…NTSD.

This is Leucine-rich repeat domain-containing protein YddK (yddK) from Escherichia coli (strain K12).